A 372-amino-acid polypeptide reads, in one-letter code: tRNA 2-selenouridine synthase (372 aa).

One can recognise a Rhodanese domain in the interval 19–142; sequence LASGHPIMDV…MRQYLIDTID (124 aa). Catalysis depends on Cys-102, which acts as the S-selanylcysteine intermediate.

Belongs to the SelU family. As to quaternary structure, monomer.

It catalyses the reaction 5-methylaminomethyl-2-thiouridine(34) in tRNA + selenophosphate + (2E)-geranyl diphosphate + H2O + H(+) = 5-methylaminomethyl-2-selenouridine(34) in tRNA + (2E)-thiogeraniol + phosphate + diphosphate. The enzyme catalyses 5-methylaminomethyl-2-thiouridine(34) in tRNA + (2E)-geranyl diphosphate = 5-methylaminomethyl-S-(2E)-geranyl-thiouridine(34) in tRNA + diphosphate. The catalysed reaction is 5-methylaminomethyl-S-(2E)-geranyl-thiouridine(34) in tRNA + selenophosphate + H(+) = 5-methylaminomethyl-2-(Se-phospho)selenouridine(34) in tRNA + (2E)-thiogeraniol. It carries out the reaction 5-methylaminomethyl-2-(Se-phospho)selenouridine(34) in tRNA + H2O = 5-methylaminomethyl-2-selenouridine(34) in tRNA + phosphate. Involved in the post-transcriptional modification of the uridine at the wobble position (U34) of tRNA(Lys), tRNA(Glu) and tRNA(Gln). Catalyzes the conversion of 2-thiouridine (S2U-RNA) to 2-selenouridine (Se2U-RNA). Acts in a two-step process involving geranylation of 2-thiouridine (S2U) to S-geranyl-2-thiouridine (geS2U) and subsequent selenation of the latter derivative to 2-selenouridine (Se2U) in the tRNA chain. This Shewanella loihica (strain ATCC BAA-1088 / PV-4) protein is tRNA 2-selenouridine synthase.